A 171-amino-acid chain; its full sequence is uncharacterized protein (171 aa).

2 disordered regions span residues 68–112 (NKNN…DQPY) and 152–171 (LPEK…SIKN). Residues 161-171 (DDEDDMFSIKN) are compositionally biased toward acidic residues.

It belongs to the asfivirus H171R family.

The protein resides in the virion. This is an uncharacterized protein from African swine fever virus (strain Badajoz 1971 Vero-adapted) (Ba71V).